The following is a 652-amino-acid chain: Acetyl-coenzyme A synthetase (652 aa).

CoA-binding positions include 191-194, Thr311, and Asn335; that span reads RAGR. Residues 387 to 389, 411 to 416, Asp500, and Arg515 contribute to the ATP site; these read GEP and DTWWQT. Residue Ser523 coordinates CoA. ATP is bound at residue Arg526. Residues Val537, His539, and Ile542 each coordinate Mg(2+). Arg584 is a CoA binding site. Residue Lys609 is modified to N6-acetyllysine.

The protein belongs to the ATP-dependent AMP-binding enzyme family. Mg(2+) serves as cofactor. Post-translationally, acetylated. Deacetylation by the SIR2-homolog deacetylase activates the enzyme.

The catalysed reaction is acetate + ATP + CoA = acetyl-CoA + AMP + diphosphate. Catalyzes the conversion of acetate into acetyl-CoA (AcCoA), an essential intermediate at the junction of anabolic and catabolic pathways. Acs undergoes a two-step reaction. In the first half reaction, Acs combines acetate with ATP to form acetyl-adenylate (AcAMP) intermediate. In the second half reaction, it can then transfer the acetyl group from AcAMP to the sulfhydryl group of CoA, forming the product AcCoA. Its function is as follows. Enables the cell to use acetate during aerobic growth to generate energy via the TCA cycle, and biosynthetic compounds via the glyoxylate shunt. Acetylates CheY, the response regulator involved in flagellar movement and chemotaxis. This is Acetyl-coenzyme A synthetase from Serratia proteamaculans (strain 568).